The sequence spans 179 residues: Beta-defensin 22 (179 aa).

The signal sequence occupies residues Met-1 to Gly-20. Cystine bridges form between Cys-27-Cys-58, Cys-34-Cys-52, and Cys-38-Cys-59. Residues Gly-105 to Thr-150 show a composition bias toward low complexity. The segment at Gly-105 to Ala-152 is disordered.

Belongs to the beta-defensin family. Post-translationally, O-glycosylated; glycans contain alpha(2,3)-linked sialic acids. As to expression, specifically expressed in corpus epididymis and cauda epididymis with expression in corpus being highest (at protein level). Not detected in other tissues tested, including testis, prostate, seminal vesicle and vas deferens (at protein level).

It localises to the cytoplasmic vesicle. It is found in the secretory vesicle. The protein resides in the acrosome. The protein localises to the secreted. Its subcellular location is the extracellular space. In terms of biological role, probable component of sperm glycocalyx. Likely protects and facilitates transport of sperm in the female reproductive tract. Probably released from the sperm surface during capacitation. The polypeptide is Beta-defensin 22 (Mus musculus (Mouse)).